We begin with the raw amino-acid sequence, 337 residues long: MKRIAVLTSGGDAPGMNAAIRAVVRKAISEGMEVYGINRGYAGMVDGDIFPLGSKEVGDKISRGGTFLYSARYPEFAQLEGQLAGIEQLKKHGIEGVVVIGGDGSYHGAMRLTEHGFPAVGIPGTIDNDIAGTDYTIGFDTAVNTAVEAIDKLRDTSSSHGRTFVVEVMGRNAGDIALWAGIASGADQIIVPEEEFDIEKVASTIQYDFEHKGKNHHIIVLAEGVMSGEAFAQKLKEAGDKSDLRVTNLGHILRGGSPTARDRVIASWMGSHAVELLKDGKGGLAVGIHNEELVESPILGTAEEGALFSLTEEGKIIVNNPHKARLDFAALNRSLSQ.

G11 contributes to the ATP binding site. 21 to 25 (RAVVR) lines the ADP pocket. ATP-binding positions include 72-73 (RY) and 102-105 (GDGS). D103 contributes to the Mg(2+) binding site. 125–127 (TID) serves as a coordination point for substrate. The active-site Proton acceptor is the D127. Residue R154 participates in ADP binding. Residues R162 and 169–171 (MGR) each bind substrate. Residues 185 to 187 (GAD), K212, and 214 to 216 (KNH) each bind ADP. Residues E223, R245, and 251-254 (HILR) each bind substrate.

It belongs to the phosphofructokinase type A (PFKA) family. ATP-dependent PFK group I subfamily. Prokaryotic clade 'B1' sub-subfamily. As to quaternary structure, homotetramer. It depends on Mg(2+) as a cofactor.

It localises to the cytoplasm. The enzyme catalyses beta-D-fructose 6-phosphate + ATP = beta-D-fructose 1,6-bisphosphate + ADP + H(+). It functions in the pathway carbohydrate degradation; glycolysis; D-glyceraldehyde 3-phosphate and glycerone phosphate from D-glucose: step 3/4. Allosterically activated by ADP and other diphosphonucleosides, and allosterically inhibited by phosphoenolpyruvate. Functionally, catalyzes the phosphorylation of D-fructose 6-phosphate to fructose 1,6-bisphosphate by ATP, the first committing step of glycolysis. This chain is ATP-dependent 6-phosphofructokinase, found in Streptococcus pyogenes serotype M1.